A 155-amino-acid polypeptide reads, in one-letter code: Transcriptional repressor NrdR (155 aa).

The segment at 3-34 (CPFCQHDDTQVLDTRVSEEGDSIRRRRRCTSC) is a zinc-finger region. In terms of domain architecture, ATP-cone spans 49–139 (PVVVKKNGSR…VYKSFEDVAE (91 aa)).

This sequence belongs to the NrdR family. The cofactor is Zn(2+).

Its function is as follows. Negatively regulates transcription of bacterial ribonucleotide reductase nrd genes and operons by binding to NrdR-boxes. This Janthinobacterium sp. (strain Marseille) (Minibacterium massiliensis) protein is Transcriptional repressor NrdR.